Reading from the N-terminus, the 431-residue chain is Adenylosuccinate synthetase (431 aa).

Residues glycine 12–lysine 18 and glycine 40–threonine 42 contribute to the GTP site. The Proton acceptor role is filled by aspartate 13. Aspartate 13 and glycine 40 together coordinate Mg(2+). IMP is bound by residues aspartate 13–lysine 16, asparagine 38–histidine 41, threonine 130, arginine 144, glutamine 225, threonine 240, and arginine 304. Histidine 41 (proton donor) is an active-site residue. Residue alanine 300 to arginine 306 coordinates substrate. Residues arginine 306, lysine 332–aspartate 334, and serine 414–glycine 416 contribute to the GTP site.

This sequence belongs to the adenylosuccinate synthetase family. In terms of assembly, homodimer. Mg(2+) serves as cofactor.

It is found in the cytoplasm. The catalysed reaction is IMP + L-aspartate + GTP = N(6)-(1,2-dicarboxyethyl)-AMP + GDP + phosphate + 2 H(+). Its pathway is purine metabolism; AMP biosynthesis via de novo pathway; AMP from IMP: step 1/2. In terms of biological role, plays an important role in the de novo pathway of purine nucleotide biosynthesis. Catalyzes the first committed step in the biosynthesis of AMP from IMP. The polypeptide is Adenylosuccinate synthetase (Geotalea uraniireducens (strain Rf4) (Geobacter uraniireducens)).